The chain runs to 216 residues: Somatotropin (216 aa).

A signal peptide spans 1 to 26 (MAAGPRTSMLLAFALLCLPWTQEVGA). Residue His-45 participates in Zn(2+) binding. Cys-78 and Cys-189 are disulfide-bonded. Position 131 is a phosphoserine (Ser-131). Glu-198 lines the Zn(2+) pocket. The cysteines at positions 206 and 214 are disulfide-linked.

This sequence belongs to the somatotropin/prolactin family.

It is found in the secreted. In terms of biological role, plays an important role in growth control. Its major role in stimulating body growth is to stimulate the liver and other tissues to secrete IGF1. It stimulates both the differentiation and proliferation of myoblasts. It also stimulates amino acid uptake and protein synthesis in muscle and other tissues. The polypeptide is Somatotropin (GH1) (Delphinus delphis (Short-beaked common dolphin)).